The chain runs to 1888 residues: E3 ubiquitin-protein ligase UBR3 (1888 aa).

A disordered region spans residues methionine 1–leucine 24. A UBR-type zinc finger spans residues alanine 118 to isoleucine 189. Residues glycine 339–lysine 362 form a disordered region. A phosphoserine mark is found at serine 343 and serine 344. A run of 2 helical transmembrane segments spans residues methionine 761–methionine 781 and leucine 919–aspartate 939. Disordered regions lie at residues alanine 1008–glutamine 1028 and valine 1164–alanine 1186. Residues proline 1016–glutamine 1028 are compositionally biased toward polar residues. Residues lysine 1168–serine 1199 adopt a coiled-coil conformation. The span at threonine 1170–alanine 1186 shows a compositional bias: basic and acidic residues. Serine 1199 is modified (phosphoserine). The RING-type; degenerate zinc-finger motif lies at aspartate 1306–arginine 1364. The chain crosses the membrane as a helical span at residues glutamine 1806–isoleucine 1826.

It belongs to the E3 ubiquitin-protein ligase UBR1-like family. As to quaternary structure, interacts with UBE2A and UBE2B.

Its subcellular location is the membrane. It carries out the reaction S-ubiquitinyl-[E2 ubiquitin-conjugating enzyme]-L-cysteine + [acceptor protein]-L-lysine = [E2 ubiquitin-conjugating enzyme]-L-cysteine + N(6)-ubiquitinyl-[acceptor protein]-L-lysine.. Its pathway is protein modification; protein ubiquitination. In terms of biological role, E3 ubiquitin-protein ligase which is a component of the N-end rule pathway. Does not bind to proteins bearing specific N-terminal residues that are destabilizing according to the N-end rule, leading to their ubiquitination and subsequent degradation. May play a role in Shh signaling by mediating the ubiquitination of Kif7. May be important for MYH9 function in certain tissues, possibly by regulating the ubiquitination of MYH9 and consequently affecting its interaction with MYO7A. The polypeptide is E3 ubiquitin-protein ligase UBR3 (UBR3) (Homo sapiens (Human)).